The sequence spans 332 residues: Ferredoxin--NADP reductase (332 aa).

Positions 33, 41, 46, 86, 120, 286, and 327 each coordinate FAD.

Belongs to the ferredoxin--NADP reductase type 2 family. As to quaternary structure, homodimer. The cofactor is FAD.

The enzyme catalyses 2 reduced [2Fe-2S]-[ferredoxin] + NADP(+) + H(+) = 2 oxidized [2Fe-2S]-[ferredoxin] + NADPH. In Rickettsia bellii (strain OSU 85-389), this protein is Ferredoxin--NADP reductase.